The primary structure comprises 163 residues: Nucleotide-binding protein Pnap_1080 (163 aa).

Belongs to the YajQ family.

Nucleotide-binding protein. The chain is Nucleotide-binding protein Pnap_1080 from Polaromonas naphthalenivorans (strain CJ2).